The following is a 222-amino-acid chain: Protein GrpE (222 aa).

Residues 1–64 (MSDQNLGQGS…GEEILSDDDL (64 aa)) are disordered. Residues 16-44 (EEPIVRDKRRIDPETGKVREPQDLSHEEL) are compositionally biased toward basic and acidic residues. A compositionally biased stretch (acidic residues) spans 54 to 64 (QGEEILSDDDL).

It belongs to the GrpE family. As to quaternary structure, homodimer.

The protein resides in the cytoplasm. Participates actively in the response to hyperosmotic and heat shock by preventing the aggregation of stress-denatured proteins, in association with DnaK and GrpE. It is the nucleotide exchange factor for DnaK and may function as a thermosensor. Unfolded proteins bind initially to DnaJ; upon interaction with the DnaJ-bound protein, DnaK hydrolyzes its bound ATP, resulting in the formation of a stable complex. GrpE releases ADP from DnaK; ATP binding to DnaK triggers the release of the substrate protein, thus completing the reaction cycle. Several rounds of ATP-dependent interactions between DnaJ, DnaK and GrpE are required for fully efficient folding. The protein is Protein GrpE of Leifsonia xyli subsp. xyli (strain CTCB07).